The sequence spans 393 residues: MDAATLTYDTLRFAEFEDFPETSEPVWILGRKYSIFTEKDEILSDVASRLWFTYRKNFPAIGGTGPTSDTGWGCMLRCGQMIFAQALVCRHLGRDWRWTQRKRQPDSYFSVLNAFIDRKDSYYSIHQIAQMGVGEGKSIGQWYGPNTVAQVLKKLAVFDTWSSLAVHIAMDNTVVMEEIRRLCRTSVPCAGATAFPADSDRHCNGFPAGAEVTNRPSPWRPLVLLIPLRLGLTDINEAYVETLKHCFMMPQSLGVIGGKPNSAHYFIGYVGEELIYLDPHTTQPAVEPTDGCFIPDESFHCQHPPCRMSIAELDPSIAVGFFCKTEDDFNDWCQQVKKLSLLGGALPMFELVELQPSHLACPDVLNLSLDSSDVERLERFFDSEDEDFEILSL.

Met1 carries the post-translational modification N-acetylmethionine. Ser34 is modified (phosphoserine; by PKB/AKT1 and PKB/AKT2). Cys74 serves as the catalytic Nucleophile. At Cys189 the chain carries S-nitrosocysteine. Active-site residues include Asp278 and His280. 2 positions are modified to S-nitrosocysteine: Cys292 and Cys301. An intrachain disulfide couples Cys292 to Cys361. Ser316 carries the post-translational modification Phosphoserine; by ULK1. A Phosphoserine; by STK26 modification is found at Ser383. The LIR motif lies at 388 to 391 (FEIL). Ser392 bears the Phosphoserine mark.

This sequence belongs to the peptidase C54 family. Interacts with PFKP; promoting phosphorylation of ATG4B at Ser-34. Interacts with GBP7. In terms of processing, phosphorylation at Ser-383 and Ser-392 promotes autophagy by increasing protein delipidation activity without affecting proteolytic activation of ATG8 proteins. Phosphorylation at Ser-316 by ULK1 inhibits autophagy by decreasing both proteolytic activation and delipidation activities. Phosphorylation at Ser-316 is dephosphorylated by protein phosphatase 2A (PP2A). Phosphorylation at Ser-34 by AKT2 promotes its hydrolase activity, leading to increased proteolytic activation and delipidation of ATG8 family proteins. Phosphorylation at Ser-34 by AKT1 promotes mitochondrial localization and inhibition of the F1F0-ATP synthase activity, leading to elevation of mitochondrial reactive oxygen species (ROS). Post-translationally, ubiquitinated by RNF5, leading to its degradation by the proteasome. S-nitrosylation at Cys-189 and Cys-292 in response to high glucose decreases both proteolytic activation and delipidation activities. In terms of processing, O-glycosylated by OGT, leading to increase protease activity, thereby promoting the proteolytic activation of ATG8 family proteins. Post-translationally, forms reversible intrachain disulfide bonds in response to oxidative stress. Forms interchain disulfide bonds, leading to formation of homooligomers in response to oxidation.

The protein resides in the cytoplasm. It is found in the cytosol. Its subcellular location is the cytoplasmic vesicle. The protein localises to the autophagosome. It localises to the endoplasmic reticulum. The protein resides in the mitochondrion. The catalysed reaction is [protein]-C-terminal L-amino acid-glycyl-phosphatidylethanolamide + H2O = [protein]-C-terminal L-amino acid-glycine + a 1,2-diacyl-sn-glycero-3-phosphoethanolamine. It catalyses the reaction [protein]-C-terminal L-amino acid-glycyl-phosphatidylserine + H2O = [protein]-C-terminal L-amino acid-glycine + a 1,2-diacyl-sn-glycero-3-phospho-L-serine. Inhibited by N-ethylmaleimide. Redox-regulated during autophagy since reducing conditions activate ATG4A whereas an oxidizing environment such as the presence of H(2)O(2) inhibits its activity. The cysteine protease activity compounds is inhibited by styrylquinoline compounds 4-28 and LV-320. Cysteine protease that plays a key role in autophagy by mediating both proteolytic activation and delipidation of ATG8 family proteins. Required for canonical autophagy (macroautophagy), non-canonical autophagy as well as for mitophagy. The protease activity is required for proteolytic activation of ATG8 family proteins: cleaves the C-terminal amino acid of ATG8 proteins MAP1LC3A, MAP1LC3B, MAP1LC3C, GABARAPL1, GABARAPL2 and GABARAP, to reveal a C-terminal glycine. Exposure of the glycine at the C-terminus is essential for ATG8 proteins conjugation to phosphatidylethanolamine (PE) and insertion to membranes, which is necessary for autophagy. Protease activity is also required to counteract formation of high-molecular weight conjugates of ATG8 proteins (ATG8ylation): acts as a deubiquitinating-like enzyme that removes ATG8 conjugated to other proteins, such as ATG3. In addition to the protease activity, also mediates delipidation of ATG8 family proteins. Catalyzes delipidation of PE-conjugated forms of ATG8 proteins during macroautophagy. Also involved in non-canonical autophagy, a parallel pathway involving conjugation of ATG8 proteins to single membranes at endolysosomal compartments, by catalyzing delipidation of ATG8 proteins conjugated to phosphatidylserine (PS). Compared to other members of the family (ATG4A, ATG4C or ATG4C), constitutes the major protein for proteolytic activation of ATG8 proteins, while it displays weaker delipidation activity than other ATG4 paralogs. Involved in phagophore growth during mitophagy independently of its protease activity and of ATG8 proteins: acts by regulating ATG9A trafficking to mitochondria and promoting phagophore-endoplasmic reticulum contacts during the lipid transfer phase of mitophagy. The protein is Cysteine protease ATG4B of Homo sapiens (Human).